Here is a 263-residue protein sequence, read N- to C-terminus: Ribosomal RNA large subunit methyltransferase E (263 aa).

S-adenosyl-L-methionine contacts are provided by Gly-48, Trp-50, Asp-68, Asp-88, and Asp-118. Lys-158 functions as the Proton acceptor in the catalytic mechanism. A TRAM domain is found at 205–263 (PVREGDIVEATIEDIGEEGDGIAKVENFTVFVSGVEDGETVEVRIDDVKPRYAFAEPVE).

The protein belongs to the class I-like SAM-binding methyltransferase superfamily. RNA methyltransferase RlmE family.

The protein localises to the cytoplasm. The catalysed reaction is uridine(2552) in 23S rRNA + S-adenosyl-L-methionine = 2'-O-methyluridine(2552) in 23S rRNA + S-adenosyl-L-homocysteine + H(+). Its function is as follows. Specifically methylates the uridine in position 2552 of 23S rRNA at the 2'-O position of the ribose in the fully assembled 50S ribosomal subunit. The sequence is that of Ribosomal RNA large subunit methyltransferase E from Haloarcula marismortui (strain ATCC 43049 / DSM 3752 / JCM 8966 / VKM B-1809) (Halobacterium marismortui).